Reading from the N-terminus, the 557-residue chain is Potassium-transporting ATPase potassium-binding subunit (557 aa).

12 helical membrane passes run 5-25 (GFLL…PLGS), 63-83 (LCAI…MLLG), 132-152 (GLTV…FALI), 170-190 (LLRI…LFFI), 253-273 (FVQM…FGEV), 283-303 (LLWA…WAEV), 329-349 (VLVS…AVIA), 356-376 (ALGG…FGGV), 379-399 (GLYG…LMIG), 416-436 (LTAL…ALAM), 484-504 (LLAF…MAIA), and 526-546 (LFVG…FIPA).

Belongs to the KdpA family. The system is composed of three essential subunits: KdpA, KdpB and KdpC.

It localises to the cell inner membrane. Its function is as follows. Part of the high-affinity ATP-driven potassium transport (or Kdp) system, which catalyzes the hydrolysis of ATP coupled with the electrogenic transport of potassium into the cytoplasm. This subunit binds the periplasmic potassium ions and delivers the ions to the membrane domain of KdpB through an intramembrane tunnel. This is Potassium-transporting ATPase potassium-binding subunit from Escherichia coli (strain K12 / MC4100 / BW2952).